The following is a 100-amino-acid chain: Putative insulin-like peptide beta-type 6 (100 aa).

An N-terminal signal peptide occupies residues 1-18; sequence MHSIVALMLIGTILPIAA. 4 disulfide bridges follow: C54–C83, C66–C96, C70–C97, and C82–C87.

It belongs to the insulin family.

Its subcellular location is the secreted. This is Putative insulin-like peptide beta-type 6 (ins-5) from Caenorhabditis elegans.